The chain runs to 287 residues: ATP synthase gamma chain (287 aa).

Belongs to the ATPase gamma chain family. In terms of assembly, F-type ATPases have 2 components, CF(1) - the catalytic core - and CF(0) - the membrane proton channel. CF(1) has five subunits: alpha(3), beta(3), gamma(1), delta(1), epsilon(1). CF(0) has three main subunits: a, b and c.

The protein localises to the cell inner membrane. Produces ATP from ADP in the presence of a proton gradient across the membrane. The gamma chain is believed to be important in regulating ATPase activity and the flow of protons through the CF(0) complex. The polypeptide is ATP synthase gamma chain (Salmonella agona (strain SL483)).